Consider the following 393-residue polypeptide: S-adenosylmethionine synthase 2 (393 aa).

Glutamate 9 is a Mg(2+) binding site. Histidine 15 provides a ligand contact to ATP. Position 43 (glutamate 43) interacts with K(+). Glutamate 56 and glutamine 99 together coordinate L-methionine. ATP is bound by residues 167 to 169 (DGK), 235 to 238 (SGRF), aspartate 246, 252 to 253 (RK), alanine 269, lysine 273, and lysine 277. Position 246 (aspartate 246) interacts with L-methionine. Lysine 277 provides a ligand contact to L-methionine.

It belongs to the AdoMet synthase family. In terms of assembly, homotetramer. Mn(2+) is required as a cofactor. It depends on Mg(2+) as a cofactor. The cofactor is Co(2+). K(+) serves as cofactor.

The protein resides in the cytoplasm. It catalyses the reaction L-methionine + ATP + H2O = S-adenosyl-L-methionine + phosphate + diphosphate. It functions in the pathway amino-acid biosynthesis; S-adenosyl-L-methionine biosynthesis; S-adenosyl-L-methionine from L-methionine: step 1/1. Its function is as follows. Catalyzes the formation of S-adenosylmethionine from methionine and ATP. The reaction comprises two steps that are both catalyzed by the same enzyme: formation of S-adenosylmethionine (AdoMet) and triphosphate, and subsequent hydrolysis of the triphosphate. The polypeptide is S-adenosylmethionine synthase 2 (SAMS2) (Elaeagnus umbellata (Autumn olive)).